The primary structure comprises 163 residues: Photosystem II extrinsic protein V (163 aa).

Positions 1–26 are cleaved as a signal peptide; it reads MFKKSSQLFSLVFFTIFSIFIGTASA. Heme c-binding residues include cysteine 63, cysteine 66, histidine 67, and methionine 130.

This sequence belongs to the cytochrome c family. PsbV subfamily. As to quaternary structure, PSII is composed of 1 copy each of membrane proteins PsbA, PsbB, PsbC, PsbD, PsbE, PsbF, PsbH, PsbI, PsbJ, PsbK, PsbL, PsbM, PsbT, PsbY, PsbZ, Psb30/Ycf12, at least 3 peripheral proteins of the oxygen-evolving complex and a large number of cofactors. It forms dimeric complexes. Requires heme c as cofactor.

It is found in the plastid. The protein resides in the chloroplast thylakoid membrane. One of the extrinsic, lumenal subunits of photosystem II (PSII). PSII is a light-driven water plastoquinone oxidoreductase, using light energy to abstract electrons from H(2)O, generating a proton gradient subsequently used for ATP formation. The extrinsic proteins stabilize the structure of photosystem II oxygen-evolving complex (OEC), the ion environment of oxygen evolution and protect the OEC against heat-induced inactivation. This is Photosystem II extrinsic protein V from Phaeodactylum tricornutum (strain CCAP 1055/1).